We begin with the raw amino-acid sequence, 314 residues long: MNKGKIENIKDKIDGNELDLSLSNLTEVPVKELAAFPKATFLDLSCNNLITLTPEFCSLTHLIKIDLNKNQLVCLPEEIGQLVNLQHLDLYNNKLKMLPIGFSQLKSLKWLDLKDNPLEPTLAKAAGDCLDEKQCRQCASRVLQHMKVLQEEAEKELERRLLKEREQEKKKEAKQREKEAREKEAQKKKKAEEKERKRKEYQAQVAAVAAQEQQKKKKEEKKKKAAQNQGKKAAPESVPKAKRSICSLFFSLLLKLVLLLVIGVSSVVAVCQLTELRKEAFCIPLNVHFEETVRWAQGLDVVQQVIQKMSDLRT.

Topologically, residues 1 to 247 are cytoplasmic; that stretch reads MNKGKIENIK…VPKAKRSICS (247 aa). LRR repeat units lie at residues 14-35, 38-60, 61-82, 84-106, and 107-126; these read DGNE…ELAA, KATF…CSLT, HLIK…IGQL, NLQH…SQLK, and SLKW…AKAA. A coiled-coil region spans residues 146-216; it reads MKVLQEEAEK…AVAAQEQQKK (71 aa). Disordered regions lie at residues 165-197 and 212-237; these read REQE…KERK and EQQK…APES. Residues 215–225 show a composition bias toward basic residues; the sequence is KKKKEEKKKKA. Residues 248-268 traverse the membrane as a helical segment; it reads LFFSLLLKLVLLLVIGVSSVV. Over 269 to 314 the chain is Lumenal; it reads AVCQLTELRKEAFCIPLNVHFEETVRWAQGLDVVQQVIQKMSDLRT.

In terms of assembly, interacts with SGO1.

It localises to the microsome membrane. It is found in the endoplasmic reticulum membrane. The protein resides in the nucleus envelope. Required for nuclear import of FGF1. This chain is Leucine-rich repeat-containing protein 59 (lrrc59), found in Danio rerio (Zebrafish).